The sequence spans 117 residues: Large ribosomal subunit protein uL18 (117 aa).

Residues 1-17 (MNLSRNKARKVKQKRLR) show a composition bias toward basic residues. Positions 1-23 (MNLSRNKARKVKQKRLRAKSELS) are disordered.

Belongs to the universal ribosomal protein uL18 family. Part of the 50S ribosomal subunit; part of the 5S rRNA/L5/L18/L25 subcomplex. Contacts the 5S and 23S rRNAs.

Its function is as follows. This is one of the proteins that bind and probably mediate the attachment of the 5S RNA into the large ribosomal subunit, where it forms part of the central protuberance. In Mycoplasmopsis synoviae (strain 53) (Mycoplasma synoviae), this protein is Large ribosomal subunit protein uL18.